Reading from the N-terminus, the 197-residue chain is tRNA(Phe) 7-((3-amino-3-carboxypropyl)-4-demethylwyosine(37)-N(4))-methyltransferase (197 aa).

This sequence belongs to the TYW3 family.

The enzyme catalyses 4-demethyl-7-[(3S)-3-amino-3-carboxypropyl]wyosine(37) in tRNA(Phe) + S-adenosyl-L-methionine = 7-[(3S)-3-amino-3-carboxypropyl]wyosine(37) in tRNA(Phe) + S-adenosyl-L-homocysteine + H(+). S-adenosyl-L-methionine-dependent methyltransferase that acts as a component of the wyosine derivatives biosynthesis pathway. Probably methylates N-4 position of wybutosine-86 to produce wybutosine-72. The protein is tRNA(Phe) 7-((3-amino-3-carboxypropyl)-4-demethylwyosine(37)-N(4))-methyltransferase of Thermococcus sibiricus (strain DSM 12597 / MM 739).